A 304-amino-acid chain; its full sequence is Ribosomal RNA large subunit methyltransferase F (304 aa).

Belongs to the methyltransferase superfamily. METTL16/RlmF family.

It is found in the cytoplasm. The catalysed reaction is adenosine(1618) in 23S rRNA + S-adenosyl-L-methionine = N(6)-methyladenosine(1618) in 23S rRNA + S-adenosyl-L-homocysteine + H(+). Its function is as follows. Specifically methylates the adenine in position 1618 of 23S rRNA. The chain is Ribosomal RNA large subunit methyltransferase F from Klebsiella pneumoniae subsp. pneumoniae (strain ATCC 700721 / MGH 78578).